We begin with the raw amino-acid sequence, 411 residues long: MATTATMATSGSARKRLLKEEDMTKVEFETSEEVDVTPTFDTMGLREDLLRGIYAYGFEKPSAIQQRAIKQIIKGRDVIAQSQSGTGKTATFSISVLQCLDIQVRETQALILAPARELAVQIQKGLLTLGDYMNVQCHACIGGTNVGEDIRKLDYGQHVVAGTPGRVFDMIRRRSLRTRAIKMLVLDEADEMLNKGFKEQIYDVYRYLPPATQVVLISATLPHEILEMTNKFMTDPIRILVKRDELTLEGIKQFFVAVEREEWKFDTLCDLYDTLTITQAVIFCNTKRKVDWLTEKMREANFTVSSMHGDMPQKERESIMKEFRSGASRVLISTDVWARGLDVPQVSLIINYDLPNNRELYIHRIGRSGRYGRKGVAINFVKNDDIRILRDIEQYYSTQIDEMPMNVADLI.

M1 carries the N-acetylmethionine modification. A2 is subject to N-acetylalanine; in Eukaryotic initiation factor 4A-III, N-terminally processed. 2 positions are modified to phosphoserine: S10 and S12. K19 participates in a covalent cross-link: Glycyl lysine isopeptide (Lys-Gly) (interchain with G-Cter in SUMO2). Positions 38 to 66 match the Q motif motif; that stretch reads PTFDTMGLREDLLRGIYAYGFEKPSAIQQ. ATP is bound by residues K60, Q65, and 85 to 90; that span reads GTGKTA. One can recognise a Helicase ATP-binding domain in the interval 69 to 239; it reads IKQIIKGRDV…NKFMTDPIRI (171 aa). K124 bears the N6-acetyllysine mark. A Glycyl lysine isopeptide (Lys-Gly) (interchain with G-Cter in SUMO2) cross-link involves residue K152. Residue T163 is modified to Phosphothreonine. Positions 187–190 match the DEAD box motif; the sequence is DEAD. N6-acetyllysine occurs at positions 198 and 296. The region spanning 250–411 is the Helicase C-terminal domain; sequence GIKQFFVAVE…EMPMNVADLI (162 aa). K314 is covalently cross-linked (Glycyl lysine isopeptide (Lys-Gly) (interchain with G-Cter in SUMO2)). The residue at position 321 (K321) is an N6-acetyllysine. Residues D342 and 367 to 371 contribute to the ATP site; that span reads RSGRY. Glycyl lysine isopeptide (Lys-Gly) (interchain with G-Cter in SUMO2) cross-links involve residues K374 and K382.

The protein belongs to the DEAD box helicase family. eIF4A subfamily. As to quaternary structure, identified in the spliceosome C complex. Core component of the mRNA splicing-dependent exon junction complex (EJC); the core complex contains CASC3, EIF4A3, MAGOH or MAGOHB, and RBM8A. Interacts with CASC3, MAGOH, NXF1, RBM8A and ALYREF/THOC4. Component of the ALYREF/THOC4-EJC-RNA complex; in the complex interacts with MAGOH, RBM8A and THOC4 (via the WXHD motif); these interactions are likely specific to RNA-bound EJC. May interact with NOM1. Interacts with POLDIP3. Interacts with CWC22 and PRPF19 in an RNA-independent manner. Direct interaction with CWC22 is mediated by the helicase C-terminal domain. Full interaction with CWC22 occurs only when EIF4A3 is not part of the EJC and prevents EIF4A3 binding to RNA. Identified in a complex composed of the EJC core, UPF3B and UPF2. The EJC core can also interact with UPF3A (in vitro). Interacts with NCBP3. Interacts with NRDE2. Interacts with DHX34; the interaction is RNA-independent.

The protein resides in the nucleus. It is found in the nucleus speckle. It localises to the cytoplasm. It catalyses the reaction ATP + H2O = ADP + phosphate + H(+). With respect to regulation, the ATPase activity is increased some 4-fold in the presence of RNA. Functionally, ATP-dependent RNA helicase. Involved in pre-mRNA splicing as component of the spliceosome. Core component of the splicing-dependent multiprotein exon junction complex (EJC) deposited at splice junctions on mRNAs. The EJC is a dynamic structure consisting of core proteins and several peripheral nuclear and cytoplasmic associated factors that join the complex only transiently either during EJC assembly or during subsequent mRNA metabolism. The EJC marks the position of the exon-exon junction in the mature mRNA for the gene expression machinery and the core components remain bound to spliced mRNAs throughout all stages of mRNA metabolism thereby influencing downstream processes including nuclear mRNA export, subcellular mRNA localization, translation efficiency and nonsense-mediated mRNA decay (NMD). Its RNA-dependent ATPase and RNA-helicase activities are induced by CASC3, but abolished in presence of the MAGOH-RBM8A heterodimer, thereby trapping the ATP-bound EJC core onto spliced mRNA in a stable conformation. The inhibition of ATPase activity by the MAGOH-RBM8A heterodimer increases the RNA-binding affinity of the EJC. Involved in translational enhancement of spliced mRNAs after formation of the 80S ribosome complex. Binds spliced mRNA in sequence-independent manner, 20-24 nucleotides upstream of mRNA exon-exon junctions. Shows higher affinity for single-stranded RNA in an ATP-bound core EJC complex than after the ATP is hydrolyzed. Involved in the splicing modulation of BCL2L1/Bcl-X (and probably other apoptotic genes); specifically inhibits formation of proapoptotic isoforms; the function is different from the established EJC assembly. Involved in craniofacial development. The sequence is that of Eukaryotic initiation factor 4A-III (EIF4A3) from Macaca fascicularis (Crab-eating macaque).